The primary structure comprises 199 residues: Ribonuclease HII (199 aa).

Residues 9 to 198 (QFVAGVDEVG…VRAAIEQMNL (190 aa)) enclose the RNase H type-2 domain. A divalent metal cation-binding residues include Asp-15, Glu-16, and Asp-107.

The protein belongs to the RNase HII family. Mn(2+) serves as cofactor. The cofactor is Mg(2+).

Its subcellular location is the cytoplasm. The catalysed reaction is Endonucleolytic cleavage to 5'-phosphomonoester.. Its function is as follows. Endonuclease that specifically degrades the RNA of RNA-DNA hybrids. In Saccharophagus degradans (strain 2-40 / ATCC 43961 / DSM 17024), this protein is Ribonuclease HII.